A 185-amino-acid chain; its full sequence is Ribosome-recycling factor (185 aa).

Residues lysine 140–aspartate 166 are disordered.

The protein belongs to the RRF family.

The protein localises to the cytoplasm. In terms of biological role, responsible for the release of ribosomes from messenger RNA at the termination of protein biosynthesis. May increase the efficiency of translation by recycling ribosomes from one round of translation to another. The polypeptide is Ribosome-recycling factor (Lactobacillus johnsonii (strain CNCM I-12250 / La1 / NCC 533)).